Consider the following 95-residue polypeptide: Co-chaperonin GroES (95 aa).

It belongs to the GroES chaperonin family. In terms of assembly, heptamer of 7 subunits arranged in a ring. Interacts with the chaperonin GroEL.

It is found in the cytoplasm. Functionally, together with the chaperonin GroEL, plays an essential role in assisting protein folding. The GroEL-GroES system forms a nano-cage that allows encapsulation of the non-native substrate proteins and provides a physical environment optimized to promote and accelerate protein folding. GroES binds to the apical surface of the GroEL ring, thereby capping the opening of the GroEL channel. This chain is Co-chaperonin GroES, found in Pelobacter propionicus (strain DSM 2379 / NBRC 103807 / OttBd1).